The following is a 113-amino-acid chain: Replication initiation control protein YabA (113 aa).

Histidine 86, cysteine 88, cysteine 102, and cysteine 105 together coordinate Zn(2+).

Belongs to the YabA family. In terms of assembly, homotetramer. Interacts with both DnaA and DnaN, acting as a bridge between these two proteins. Zn(2+) is required as a cofactor.

It localises to the cytoplasm. The protein localises to the nucleoid. Involved in control of chromosome replication initiation. Inhibits the cooperative binding of DnaA to the oriC region, thus negatively regulating initiation of chromosome replication. Inhibits the ability of DnaA-ATP to form a helix on DNA; does not disassemble preformed DnaA-DNA helices. Decreases the residence time of DnaA on the chromosome at its binding sites (oriC, replication forks and promoter-binding sites). Tethers DnaA to the replication machinery via the DNA polymerase beta sliding clamp subunit (dnaN). Associates with oriC and other DnaA targets on the chromosome in a DnaA-dependent manner. The sequence is that of Replication initiation control protein YabA from Pediococcus pentosaceus (strain ATCC 25745 / CCUG 21536 / LMG 10740 / 183-1w).